A 78-amino-acid polypeptide reads, in one-letter code: Large ribosomal subunit protein bL28 (78 aa).

It belongs to the bacterial ribosomal protein bL28 family.

This chain is Large ribosomal subunit protein bL28, found in Parasynechococcus marenigrum (strain WH8102).